Reading from the N-terminus, the 396-residue chain is Aldo-keto reductase ausK (396 aa).

D76 serves as a coordination point for NADP(+). Y81 acts as the Proton donor in catalysis. H156 is a binding site for substrate. NADP(+) contacts are provided by residues 186-187 (CN), Q212, 241-251 (DALGSGKFQSR), and 317-325 (RKIQHLHDN).

The protein belongs to the aldo/keto reductase family. Aldo/keto reductase 2 subfamily. As to quaternary structure, homodimer.

It participates in secondary metabolite biosynthesis; terpenoid biosynthesis. Its function is as follows. Aldo-keto reductase; part of the gene cluster that mediates the biosynthesis of calidodehydroaustin, a fungal meroterpenoid. The first step of the pathway is the synthesis of 3,5-dimethylorsellinic acid by the polyketide synthase ausA. 3,5-dimethylorsellinic acid is then prenylated by the polyprenyl transferase ausN. Further epoxidation by the FAD-dependent monooxygenase ausM and cyclization by the probable terpene cyclase ausL lead to the formation of protoaustinoid A. Protoaustinoid A is then oxidized to spiro-lactone preaustinoid A3 by the combined action of the FAD-binding monooxygenases ausB and ausC, and the dioxygenase ausE. Acid-catalyzed keto-rearrangement and ring contraction of the tetraketide portion of preaustinoid A3 by ausJ lead to the formation of preaustinoid A4. The aldo-keto reductase ausK, with the help of ausH, is involved in the next step by transforming preaustinoid A4 into isoaustinone which is in turn hydroxylated by the P450 monooxygenase ausI to form austinolide. The cytochrome P450 monooxygenase ausG modifies austinolide to austinol. Austinol is further acetylated to austin by the O-acetyltransferase ausP, which spontaneously changes to dehydroaustin. The cytochrome P450 monooxygenase ausR then converts dehydroaustin is into 7-dehydrodehydroaustin. The hydroxylation catalyzed by ausR permits the O-acetyltransferase ausQ to add an additional acetyl group to the molecule, leading to the formation of acetoxydehydroaustin. The short chain dehydrogenase ausT catalyzes the reduction of the double bond present between carbon atoms 1 and 2 to convert 7-dehydrodehydroaustin into 1,2-dihydro-7-hydroxydehydroaustin. AusQ catalyzes not only an acetylation reaction but also the addition of the PKS ausV diketide product to 1,2-dihydro-7-hydroxydehydroaustin, forming precalidodehydroaustin. Finally, the iron/alpha-ketoglutarate-dependent dioxygenase converts precalidodehydroaustin into calidodehydroaustin. In Aspergillus calidoustus, this protein is Aldo-keto reductase ausK.